Reading from the N-terminus, the 135-residue chain is Holo-[acyl-carrier-protein] synthase (135 aa).

Mg(2+) is bound by residues D7 and E57.

The protein belongs to the P-Pant transferase superfamily. AcpS family. It depends on Mg(2+) as a cofactor.

The protein localises to the cytoplasm. The catalysed reaction is apo-[ACP] + CoA = holo-[ACP] + adenosine 3',5'-bisphosphate + H(+). In terms of biological role, transfers the 4'-phosphopantetheine moiety from coenzyme A to a Ser of acyl-carrier-protein. The protein is Holo-[acyl-carrier-protein] synthase of Corynebacterium glutamicum (strain ATCC 13032 / DSM 20300 / JCM 1318 / BCRC 11384 / CCUG 27702 / LMG 3730 / NBRC 12168 / NCIMB 10025 / NRRL B-2784 / 534).